The chain runs to 587 residues: MGLDYILVHVTYNIPLAGILTLVYWPFMTRLDWQKISTLVIISLVATIPWDSYLVRHRIWTYAPNGVIGWTLYDIPSEEVFFFIIQTYNTSLVYLILTRWLVLPMYLGTVARKETLIGASILLLAISVGLIALCFGDHFTYFGMIITWAGPFLLIQWVFSSGFIIALPKLELMVSITLPTLFLWTVDTISINQGTWTVEAPTKLGVQLWSGMDIEEVLFFLITNIVIVFGLVCIDYAIAMATCELVQSPQAVQSFPSYFRVLARFVTNKYHPDKQFVASLRKAVDRLAASSQSMYMGSAMFQGPFRIDLILLYSFFRVADDLVDESQDTESARMIIEQCDQLLEAKFSHPELFPFSPGYQEAKHPAPPELIAAIDSLPVSRLRLEHLKGLIEGFRTDLTFSAKPGSFPFVTESDLDTYAYHVASSVAASMLGLVVHHFPDHQFAINVFLRRRVVDAGERMGQTLQYINVARDIARDAAINRVYLPTTWLKQQGLGPEDVLASPTDSRLELVRDRLLDRAEFLSASAREEMKFLPDEVQGPFLATVDSYLEIGAALRRGMRPRTLDDKLRLPLGTRLWVAYRAMAWRK.

A lycopene beta-cyclase region spans residues 1–236; it reads MGLDYILVHV…IVFGLVCIDY (236 aa). Helical transmembrane passes span 5–25, 35–55, 65–85, 91–111, 116–136, 145–165, and 218–238; these read YILVHVTYNIPLAGILTLVYW, KISTLVIISLVATIPWDSYLV, NGVIGWTLYDIPSEEVFFFII, SLVYLILTRWLVLPMYLGTVA, LIGASILLLAISVGLIALCFG, IITWAGPFLLIQWVFSSGFII, and LFFLITNIVIVFGLVCIDYAI. The tract at residues 243–587 is phytoene synthase; it reads CELVQSPQAV…VAYRAMAWRK (345 aa).

In the N-terminal section; belongs to the lycopene beta-cyclase family. It in the C-terminal section; belongs to the phytoene/squalene synthase family.

The protein localises to the membrane. It carries out the reaction all-trans-lycopene = gamma-carotene. The enzyme catalyses gamma-carotene = all-trans-beta-carotene. It catalyses the reaction 2 (2E,6E,10E)-geranylgeranyl diphosphate = 15-cis-phytoene + 2 diphosphate. Its pathway is carotenoid biosynthesis; beta-carotene biosynthesis. The protein operates within carotenoid biosynthesis; phytoene biosynthesis; all-trans-phytoene from geranylgeranyl diphosphate: step 1/1. Bifunctional enzyme that catalyzes the reactions from geranylgeranyl diphosphate to phytoene (phytoene synthase) and lycopene to beta-carotene via the intermediate gamma-carotene (lycopene cyclase). In Aspergillus oryzae (strain ATCC 42149 / RIB 40) (Yellow koji mold), this protein is Bifunctional lycopene cyclase/phytoene synthase.